Here is a 660-residue protein sequence, read N- to C-terminus: Dual specificity mitogen-activated protein kinase kinase 1 (660 aa).

The span at 1-57 (MNTNTNTNTNISSSGNNIINTPTTNNNNKNNNNNNNNNNNSNNSNNNSSNNNNNNNN) shows a compositional bias: low complexity. 3 disordered regions span residues 1 to 60 (MNTN…NAVG), 105 to 169 (KGES…FNNL), and 204 to 229 (NNNYNNYNNNNNSNNNNNNYNNSNNN). A Glycyl lysine isopeptide (Lys-Gly) (interchain with G-Cter in SUMO) cross-link involves residue K105. A compositionally biased stretch (polar residues) spans 123 to 148 (LHSNLNPQLLASPTSSESMDFNQGFY). Residues 149 to 169 (NNNNNNNNNNNNNNLNNFNNL) show a composition bias toward low complexity. In terms of domain architecture, Protein kinase spans 292–641 (LKIIRVLGRG…ASNLLNHEFV (350 aa)). ATP contacts are provided by residues 298 to 306 (LGRGAGGVV) and K321. Residue D414 is the Proton acceptor of the active site. Disordered regions lie at residues 491–510 (SNLPHQQQQPLQQQQQQQQQ) and 539–573 (NNSNNNIRNSNNNNNNNNNNNNNNNNNNNNNVLDI). Low complexity-rich tracts occupy residues 496 to 510 (QQQQPLQQQQQQQQQ) and 539 to 569 (NNSNNNIRNSNNNNNNNNNNNNNNNNNNNNN).

It belongs to the protein kinase superfamily. STE Ser/Thr protein kinase family. MAP kinase kinase subfamily. In terms of assembly, interacts with mip1. The cofactor is Mg(2+). Post-translationally, sumoylated and ubiquitinated in response to chemoattractant stimulation. Sumoylation is linked to kinase activation and results in translocation.

The protein localises to the cytoplasm. It is found in the nucleus. The catalysed reaction is L-seryl-[protein] + ATP = O-phospho-L-seryl-[protein] + ADP + H(+). The enzyme catalyses L-threonyl-[protein] + ATP = O-phospho-L-threonyl-[protein] + ADP + H(+). It catalyses the reaction L-tyrosyl-[protein] + ATP = O-phospho-L-tyrosyl-[protein] + ADP + H(+). Functionally, required for cAMP-mediated activation of guanylyl cyclase activity and plays an essential role in aggregation, morphogenesis, and chemotaxis. Appears to act upstream of erk1 but not erk2. The sequence is that of Dual specificity mitogen-activated protein kinase kinase 1 from Dictyostelium discoideum (Social amoeba).